A 777-amino-acid polypeptide reads, in one-letter code: NAD(P)H-quinone oxidoreductase subunit 5, chloroplastic (777 aa).

Helical transmembrane passes span tryptophan 9 to phenylalanine 29, tryptophan 40 to isoleucine 60, isoleucine 89 to phenylalanine 109, phenylalanine 125 to isoleucine 145, isoleucine 147 to threonine 167, glycine 185 to phenylalanine 205, asparagine 220 to alanine 240, threonine 259 to alanine 279, tyrosine 290 to alanine 312, leucine 328 to isoleucine 348, alanine 355 to serine 375, threonine 397 to serine 417, tryptophan 426 to tyrosine 446, leucine 550 to phenylalanine 570, phenylalanine 604 to phenylalanine 624, and isoleucine 731 to leucine 751.

It belongs to the complex I subunit 5 family. As to quaternary structure, NDH is composed of at least 16 different subunits, 5 of which are encoded in the nucleus.

It localises to the plastid. The protein resides in the chloroplast thylakoid membrane. It catalyses the reaction a plastoquinone + NADH + (n+1) H(+)(in) = a plastoquinol + NAD(+) + n H(+)(out). It carries out the reaction a plastoquinone + NADPH + (n+1) H(+)(in) = a plastoquinol + NADP(+) + n H(+)(out). Functionally, NDH shuttles electrons from NAD(P)H:plastoquinone, via FMN and iron-sulfur (Fe-S) centers, to quinones in the photosynthetic chain and possibly in a chloroplast respiratory chain. The immediate electron acceptor for the enzyme in this species is believed to be plastoquinone. Couples the redox reaction to proton translocation, and thus conserves the redox energy in a proton gradient. The sequence is that of NAD(P)H-quinone oxidoreductase subunit 5, chloroplastic (ndhF) from Oenothera elata subsp. hookeri (Hooker's evening primrose).